The primary structure comprises 799 residues: Ribosome biogenesis protein BOP1 homolog (799 aa).

The interval 1–171 (MPRRVRAQKR…DDTSDEEHSL (171 aa)) is disordered. The span at 58–69 (SESDVTDDEQID) shows a compositional bias: acidic residues. Over residues 70–81 (EEARQADRDLLK) the composition is skewed to basic and acidic residues. Positions 93–121 (DPSDADNDDDDDEEEAASDDDDEEEDAEP) are enriched in acidic residues. The span at 122-132 (SSDSSNEASDA) shows a compositional bias: low complexity. 7 WD repeats span residues 457 to 498 (GHKA…RVVT), 500 to 538 (DAEVNMVAWCPNAGVSIVAVAHGHTVSLICPRVATAAID), 584 to 626 (PHHA…TQHP), 629 to 669 (KRNR…KKLL), 670 to 709 (TGVRWLSSLAIHPAGDNLIIGSYDKRLCWFDMDLSIKPYK), 713 to 752 (YHKYALRQVCFHKKYPIFASCGDDGNVHVLHGMVYNDLGQ), and 769 to 799 (SDGMGVMDCTFHPSQPWLFSAGSDGSIKLHV).

The protein belongs to the WD repeat BOP1/ERB1 family.

The protein localises to the nucleus. It localises to the nucleolus. Its subcellular location is the nucleoplasm. Its function is as follows. Required for maturation of ribosomal RNAs and formation of the large ribosomal subunit. The sequence is that of Ribosome biogenesis protein BOP1 homolog from Monosiga brevicollis (Choanoflagellate).